Consider the following 139-residue polypeptide: Small ribosomal subunit protein uS11 (139 aa).

Residues 1–13 (MAKQAAKGSAAAT) are compositionally biased toward low complexity. The segment at 1–30 (MAKQAAKGSAAATKRQRGKRREKKNVPRGQ) is disordered. The segment covering 14-23 (KRQRGKRREK) has biased composition (basic residues).

The protein belongs to the universal ribosomal protein uS11 family. As to quaternary structure, part of the 30S ribosomal subunit. Interacts with proteins S7 and S18. Binds to IF-3.

Its function is as follows. Located on the platform of the 30S subunit, it bridges several disparate RNA helices of the 16S rRNA. Forms part of the Shine-Dalgarno cleft in the 70S ribosome. The sequence is that of Small ribosomal subunit protein uS11 from Roseiflexus sp. (strain RS-1).